Reading from the N-terminus, the 368-residue chain is MSLFGTTSGFGTSGTSMFGSATTDNHNPMKDIEVTSSPDDSIGCLSFSPPTLPGNFLIAGSWANDVRCWEVQDSGQTIPKAQQMHTGPVLDVCWSDDGSKVFTASCDKTAKMWDLSSNQAIQIAQHDAPVKTIHWIKAPNYSCVMTGSWDKTLKFWDTRSSNPMMVLQLPERCYCADVIYPMAVVATAERGLIVYQLENQPSEFRRIESPLKHQHRCVAIFKDKQNKPTGFALGSIEGRVAIHYINPPNPAKDNFTFKCHRSNGTNTSAPQDIYAVNGIAFHPVHGTLATVGSDGRFSFWDKDARTKLKTSEQLDQPISACCFNHNGNIFAYASSYDWSKGHEFYNPQKKNYIFLRNAAEELKPRNKK.

The segment at 15–34 is disordered; sequence TSMFGSATTDNHNPMKDIEV. WD repeat units lie at residues 37–79, 84–114, 125–157, 168–206, 215–255, 271–301, and 310–346; these read SPDD…QTIP, MHTG…KMWD, QHDA…KFWD, QLPE…EFRR, HRCV…KDNF, QDIY…SFWD, and TSEQ…EFYN. A Phosphothreonine modification is found at threonine 229.

The protein belongs to the WD repeat rae1 family. As to quaternary structure, interacts with NUMA1 (via N-terminal end of the coiled-coil domain); this interaction promotes spindle formation in mitosis. Interacts with NUP98. Interacts with MYCBP2. Interacts with USP11.

The protein localises to the cytoplasm. The protein resides in the nucleus. Its subcellular location is the cytoskeleton. It localises to the spindle pole. Plays a role in mitotic bipolar spindle formation. Binds mRNA. May function in nucleocytoplasmic transport and in directly or indirectly attaching cytoplasmic mRNPs to the cytoskeleton. The sequence is that of mRNA export factor (RAE1) from Pongo abelii (Sumatran orangutan).